Here is a 142-residue protein sequence, read N- to C-terminus: Thioredoxin-like protein 4A (142 aa).

Cys38 and Cys79 form a disulfide bridge. A Phosphoserine modification is found at Ser132.

This sequence belongs to the DIM1 family. In terms of assembly, component of the precatalytic spliceosome (spliceosome B complex). Component of the U5 snRNP complex. Component of the U4/U6-U5 tri-snRNP complex. The U4/U6-U5 tri-snRNP complex is a building block of the precatalytic spliceosome (spliceosome B complex). The U4/U6-U5 tri-snRNP complex is composed of the U4, U6 and U5 snRNAs and at least PRPF3, PRPF4, PRPF6, PRPF8, PRPF31, SNRNP200, TXNL4A, SNRNP40, SNRPB, SNRPD1, SNRPD2, SNRPD3, SNRPE, SNRPF, SNRPG, DDX23, CD2BP2, PPIH, SNU13, EFTUD2, SART1 and USP39, plus LSM2, LSM3, LSM4, LSM5, LSM6, LSM7 and LSM8. Directly interacts with CD2BP2. Interacts with HNRPF, HNRPH2, NEDD9 and PQBP1. Interacts with ERBB4. In terms of processing, the disulfide bond seen in structures determined by X-ray crystallography and NMR is not essential for protein folding and function.

It is found in the nucleus. In terms of biological role, plays a role in pre-mRNA splicing as component of the U5 snRNP and U4/U6-U5 tri-snRNP complexes that are involved in spliceosome assembly, and as component of the precatalytic spliceosome (spliceosome B complex). The sequence is that of Thioredoxin-like protein 4A (TXNL4A) from Homo sapiens (Human).